Reading from the N-terminus, the 506-residue chain is Cysteine--tRNA ligase (506 aa).

Cysteine 34 serves as a coordination point for Zn(2+). The 'HIGH' region signature appears at 36–46 (PTVYDFAHIGN). Zn(2+)-binding residues include cysteine 230, histidine 269, and glutamate 273. A 'KMSKS' region motif is present at residues 302 to 306 (KMSKS). Position 305 (lysine 305) interacts with ATP.

The protein belongs to the class-I aminoacyl-tRNA synthetase family. Monomer. The cofactor is Zn(2+).

Its subcellular location is the cytoplasm. The enzyme catalyses tRNA(Cys) + L-cysteine + ATP = L-cysteinyl-tRNA(Cys) + AMP + diphosphate. This Brucella suis (strain ATCC 23445 / NCTC 10510) protein is Cysteine--tRNA ligase.